An 87-amino-acid polypeptide reads, in one-letter code: Exodeoxyribonuclease 7 small subunit (87 aa).

Belongs to the XseB family. As to quaternary structure, heterooligomer composed of large and small subunits.

It is found in the cytoplasm. It carries out the reaction Exonucleolytic cleavage in either 5'- to 3'- or 3'- to 5'-direction to yield nucleoside 5'-phosphates.. Its function is as follows. Bidirectionally degrades single-stranded DNA into large acid-insoluble oligonucleotides, which are then degraded further into small acid-soluble oligonucleotides. In Solidesulfovibrio magneticus (strain ATCC 700980 / DSM 13731 / RS-1) (Desulfovibrio magneticus), this protein is Exodeoxyribonuclease 7 small subunit.